Here is a 310-residue protein sequence, read N- to C-terminus: Thioredoxin reductase (310 aa).

34-41 (NGMQPGGQ) serves as a coordination point for FAD. Cys135 and Cys138 are disulfide-bonded. 281-290 (DVQDKIYRQA) contributes to the FAD binding site.

This sequence belongs to the class-II pyridine nucleotide-disulfide oxidoreductase family. Homodimer. Requires FAD as cofactor.

Its subcellular location is the cytoplasm. The catalysed reaction is [thioredoxin]-dithiol + NADP(+) = [thioredoxin]-disulfide + NADPH + H(+). This Rickettsia prowazekii (strain Madrid E) protein is Thioredoxin reductase (trxB).